The primary structure comprises 247 residues: MDVLSCSNNTLKGLYDISGVEVGQHFYWQIGGFQVHGQVLITSWVVIAILLGSASIAVRNPQTIPNDSQNFFEYILEFIRDVSKTQIGEEYGPWVPFIGTMFLFIFVSNWSGALLPWKLVELPHGELAAPTNDINTTVALALLTSVAYFYAGLSKKGLGYFSKYIQPTPILLPINILEDFTKPLSLSFRLFGNILADELVVVVLVSLVPSVVPIPVMFLGLFTSGIQALIFATLAAAYIGESMEGHH.

The next 5 helical transmembrane spans lie at 38–58 (QVLI…SIAV), 95–115 (VPFI…GALL), 134–154 (INTT…AGLS), 199–219 (LVVV…VMFL), and 220–240 (GLFT…AYIG).

This sequence belongs to the ATPase A chain family. As to quaternary structure, F-type ATPases have 2 components, CF(1) - the catalytic core - and CF(0) - the membrane proton channel. CF(1) has five subunits: alpha(3), beta(3), gamma(1), delta(1), epsilon(1). CF(0) has four main subunits: a, b, b' and c.

The protein localises to the plastid. It is found in the chloroplast thylakoid membrane. Key component of the proton channel; it plays a direct role in the translocation of protons across the membrane. The protein is ATP synthase subunit a, chloroplastic of Oenothera argillicola (Appalachian evening primrose).